Here is a 202-residue protein sequence, read N- to C-terminus: uncharacterized protein (202 aa).

This is an uncharacterized protein from Pseudanabaena tenuis (strain PCC 7409).